The following is a 310-amino-acid chain: Glycine--tRNA ligase alpha subunit (310 aa).

Belongs to the class-II aminoacyl-tRNA synthetase family. In terms of assembly, tetramer of two alpha and two beta subunits.

It is found in the cytoplasm. It carries out the reaction tRNA(Gly) + glycine + ATP = glycyl-tRNA(Gly) + AMP + diphosphate. The polypeptide is Glycine--tRNA ligase alpha subunit (Aliivibrio salmonicida (strain LFI1238) (Vibrio salmonicida (strain LFI1238))).